A 203-amino-acid polypeptide reads, in one-letter code: Endo-type membrane-bound lytic murein transglycosylase A (203 aa).

Residues 1 to 15 (MKLRWLLILVVFLAG) form the signal peptide. C16 carries the N-palmitoyl cysteine lipid modification. C16 is lipidated: S-diacylglycerol cysteine.

This sequence belongs to the transglycosylase Slt family.

The protein localises to the cell outer membrane. It catalyses the reaction Endolytic cleavage of the (1-&gt;4)-beta-glycosidic linkage between N-acetylmuramic acid (MurNAc) and N-acetylglucosamine (GlcNAc) residues in peptidoglycan with concomitant formation of a 1,6-anhydrobond in the MurNAc residue.. Its function is as follows. Murein-degrading enzyme. May play a role in recycling of muropeptides during cell elongation and/or cell division. Preferentially cleaves at a distance of more than two disaccharide units from the ends of the glycan chain. The polypeptide is Endo-type membrane-bound lytic murein transglycosylase A (Klebsiella pneumoniae (strain 342)).